Here is a 62-residue protein sequence, read N- to C-terminus: Sperm protamine P1 (62 aa).

The tract at residues Met1 to Tyr62 is disordered.

It belongs to the protamine P1 family. Testis.

It is found in the nucleus. The protein localises to the chromosome. Functionally, protamines substitute for histones in the chromatin of sperm during the haploid phase of spermatogenesis. They compact sperm DNA into a highly condensed, stable and inactive complex. This Dorcopsulus vanheurni (Lesser forest wallaby) protein is Sperm protamine P1 (PRM1).